Reading from the N-terminus, the 142-residue chain is Large ribosomal subunit protein uL13 (142 aa).

Belongs to the universal ribosomal protein uL13 family. In terms of assembly, part of the 50S ribosomal subunit.

This protein is one of the early assembly proteins of the 50S ribosomal subunit, although it is not seen to bind rRNA by itself. It is important during the early stages of 50S assembly. The polypeptide is Large ribosomal subunit protein uL13 (Pelobacter propionicus (strain DSM 2379 / NBRC 103807 / OttBd1)).